The following is a 155-amino-acid chain: Putative pre-16S rRNA nuclease (155 aa).

The protein belongs to the YqgF nuclease family.

The protein localises to the cytoplasm. Its function is as follows. Could be a nuclease involved in processing of the 5'-end of pre-16S rRNA. This Xylella fastidiosa (strain M12) protein is Putative pre-16S rRNA nuclease.